Here is a 110-residue protein sequence, read N- to C-terminus: NADH-quinone oxidoreductase subunit K (110 aa).

3 helical membrane passes run 13 to 33 (LNHY…GLFM), 41 to 61 (ILMS…AFSV), and 73 to 93 (IIIL…LLIY).

It belongs to the complex I subunit 4L family. NDH-1 is composed of 14 different subunits. Subunits NuoA, H, J, K, L, M, N constitute the membrane sector of the complex.

The protein resides in the cell inner membrane. It carries out the reaction a quinone + NADH + 5 H(+)(in) = a quinol + NAD(+) + 4 H(+)(out). In terms of biological role, NDH-1 shuttles electrons from NADH, via FMN and iron-sulfur (Fe-S) centers, to quinones in the respiratory chain. The immediate electron acceptor for the enzyme in this species is believed to be ubiquinone. Couples the redox reaction to proton translocation (for every two electrons transferred, four hydrogen ions are translocated across the cytoplasmic membrane), and thus conserves the redox energy in a proton gradient. This Rickettsia typhi (strain ATCC VR-144 / Wilmington) protein is NADH-quinone oxidoreductase subunit K.